Here is a 413-residue protein sequence, read N- to C-terminus: Cell division protein FtsA (413 aa).

It belongs to the FtsA/MreB family. Self-interacts. Interacts with FtsZ.

The protein resides in the cell inner membrane. In terms of biological role, cell division protein that is involved in the assembly of the Z ring. May serve as a membrane anchor for the Z ring. This chain is Cell division protein FtsA, found in Borreliella burgdorferi (strain ATCC 35210 / DSM 4680 / CIP 102532 / B31) (Borrelia burgdorferi).